The following is a 230-amino-acid chain: uncharacterized protein (230 aa).

Polar residues predominate over residues Met-1–Asp-11. The segment at Met-1–Ile-88 is disordered. Residues Asp-63 to Ser-73 are compositionally biased toward basic and acidic residues. A compositionally biased stretch (polar residues) spans Thr-79–Ile-88. At Ser-106 the chain carries Phosphoserine. Residues Leu-156–Ser-179 are compositionally biased toward basic and acidic residues. Residues Leu-156–Glu-203 are disordered. Residues Ser-182–Glu-194 are compositionally biased toward polar residues.

This is an uncharacterized protein from Saccharomyces cerevisiae (strain ATCC 204508 / S288c) (Baker's yeast).